A 456-amino-acid polypeptide reads, in one-letter code: Phosphomannomutase (456 aa).

Ser98 functions as the Phosphoserine intermediate in the catalytic mechanism. Mg(2+) is bound by residues Ser98, Asp245, Asp247, and Asp249.

Belongs to the phosphohexose mutase family. The cofactor is Mg(2+).

It carries out the reaction alpha-D-mannose 1-phosphate = D-mannose 6-phosphate. The protein operates within nucleotide-sugar biosynthesis; GDP-alpha-D-mannose biosynthesis; alpha-D-mannose 1-phosphate from D-fructose 6-phosphate: step 2/2. Its function is as follows. Involved in the biosynthesis of the capsular polysaccharide colanic acid. The sequence is that of Phosphomannomutase (manB) from Salmonella typhimurium (strain LT2 / SGSC1412 / ATCC 700720).